A 279-amino-acid chain; its full sequence is MSTLLIGDVHGCYHELRDLLSLADFDPARDTLWLTGDLVARGPDSLAVLRYVKSLGDSARLVLGNHDLHLLAIYAGISRNKPKDKLTPLLEAPDADSLINWLRRQPVLQVDNDLCLVMAHAGISPQWDLTTAQRCAREVEAMLASDSYPFFLNAMYGDMPNNWSESLSGLARLRFTTNALTRMRYCFPGGELDMICKDAPEDAPAPLRPWFDLDSPVREAGYSIAFGHWASLEGRSTPPQVYALDTGCCWGGTLTALRWEDRHSFSVPSRRASRHAKAE.

This sequence belongs to the Ap4A hydrolase family.

The catalysed reaction is P(1),P(4)-bis(5'-adenosyl) tetraphosphate + H2O = 2 ADP + 2 H(+). In terms of biological role, hydrolyzes diadenosine 5',5'''-P1,P4-tetraphosphate to yield ADP. The polypeptide is Bis(5'-nucleosyl)-tetraphosphatase, symmetrical (Edwardsiella ictaluri (strain 93-146)).